Reading from the N-terminus, the 336-residue chain is Ketol-acid reductoisomerase (NADP(+)) (336 aa).

The KARI N-terminal Rossmann domain maps to 1 to 182 (MAVIYYDKDA…GVTRAGVIET (182 aa)). NADP(+) contacts are provided by residues 25 to 28 (YGSQ), Arg-48, Ser-51, Ser-53, and 83 to 86 (DEHQ). His-108 is an active-site residue. Position 134 (Gly-134) interacts with NADP(+). The region spanning 183–328 (TFKEETETDL…KELRKMMPWL (146 aa)) is the KARI C-terminal knotted domain. Residues Asp-191, Glu-195, Glu-227, and Glu-231 each coordinate Mg(2+). A substrate-binding site is contributed by Ser-252.

It belongs to the ketol-acid reductoisomerase family. It depends on Mg(2+) as a cofactor.

The enzyme catalyses (2R)-2,3-dihydroxy-3-methylbutanoate + NADP(+) = (2S)-2-acetolactate + NADPH + H(+). It catalyses the reaction (2R,3R)-2,3-dihydroxy-3-methylpentanoate + NADP(+) = (S)-2-ethyl-2-hydroxy-3-oxobutanoate + NADPH + H(+). It functions in the pathway amino-acid biosynthesis; L-isoleucine biosynthesis; L-isoleucine from 2-oxobutanoate: step 2/4. Its pathway is amino-acid biosynthesis; L-valine biosynthesis; L-valine from pyruvate: step 2/4. Its function is as follows. Involved in the biosynthesis of branched-chain amino acids (BCAA). Catalyzes an alkyl-migration followed by a ketol-acid reduction of (S)-2-acetolactate (S2AL) to yield (R)-2,3-dihydroxy-isovalerate. In the isomerase reaction, S2AL is rearranged via a Mg-dependent methyl migration to produce 3-hydroxy-3-methyl-2-ketobutyrate (HMKB). In the reductase reaction, this 2-ketoacid undergoes a metal-dependent reduction by NADPH to yield (R)-2,3-dihydroxy-isovalerate. In Thermotoga maritima (strain ATCC 43589 / DSM 3109 / JCM 10099 / NBRC 100826 / MSB8), this protein is Ketol-acid reductoisomerase (NADP(+)).